A 281-amino-acid chain; its full sequence is 4-deoxy-L-threo-5-hexosulose-uronate ketol-isomerase (281 aa).

Zn(2+) contacts are provided by His-198, His-200, Glu-205, and His-248.

This sequence belongs to the KduI family. Requires Zn(2+) as cofactor.

The catalysed reaction is 5-dehydro-4-deoxy-D-glucuronate = 3-deoxy-D-glycero-2,5-hexodiulosonate. Its pathway is glycan metabolism; pectin degradation; 2-dehydro-3-deoxy-D-gluconate from pectin: step 4/5. Catalyzes the isomerization of 5-dehydro-4-deoxy-D-glucuronate to 3-deoxy-D-glycero-2,5-hexodiulosonate. The polypeptide is 4-deoxy-L-threo-5-hexosulose-uronate ketol-isomerase (Lacticaseibacillus paracasei (strain ATCC 334 / BCRC 17002 / CCUG 31169 / CIP 107868 / KCTC 3260 / NRRL B-441) (Lactobacillus paracasei)).